The primary structure comprises 230 residues: Phosphoribosylformylglycinamidine synthase subunit PurQ (230 aa).

The Glutamine amidotransferase type-1 domain occupies 3-230; it reads SAIIVFPGTN…LFQSIVESLS (228 aa). Cys-87 acts as the Nucleophile in catalysis. Active-site residues include His-204 and Glu-206.

In terms of assembly, part of the FGAM synthase complex composed of 1 PurL, 1 PurQ and 2 PurS subunits.

Its subcellular location is the cytoplasm. It catalyses the reaction N(2)-formyl-N(1)-(5-phospho-beta-D-ribosyl)glycinamide + L-glutamine + ATP + H2O = 2-formamido-N(1)-(5-O-phospho-beta-D-ribosyl)acetamidine + L-glutamate + ADP + phosphate + H(+). The enzyme catalyses L-glutamine + H2O = L-glutamate + NH4(+). Its pathway is purine metabolism; IMP biosynthesis via de novo pathway; 5-amino-1-(5-phospho-D-ribosyl)imidazole from N(2)-formyl-N(1)-(5-phospho-D-ribosyl)glycinamide: step 1/2. Part of the phosphoribosylformylglycinamidine synthase complex involved in the purines biosynthetic pathway. Catalyzes the ATP-dependent conversion of formylglycinamide ribonucleotide (FGAR) and glutamine to yield formylglycinamidine ribonucleotide (FGAM) and glutamate. The FGAM synthase complex is composed of three subunits. PurQ produces an ammonia molecule by converting glutamine to glutamate. PurL transfers the ammonia molecule to FGAR to form FGAM in an ATP-dependent manner. PurS interacts with PurQ and PurL and is thought to assist in the transfer of the ammonia molecule from PurQ to PurL. The sequence is that of Phosphoribosylformylglycinamidine synthase subunit PurQ from Rhodospirillum rubrum (strain ATCC 11170 / ATH 1.1.1 / DSM 467 / LMG 4362 / NCIMB 8255 / S1).